Reading from the N-terminus, the 802-residue chain is Copal-8-ol diphosphate hydratase, chloroplastic (802 aa).

The transit peptide at 1–24 directs the protein to the chloroplast; the sequence is MQVIITSSHRFFCHHLHQLKSPTS. Lysine 249 serves as a coordination point for substrate. The Mg(2+) site is built by aspartate 382 and aspartate 384. The DXDD motif motif lies at 382 to 385; sequence DVDD. Lysine 468 contacts substrate.

The protein belongs to the terpene synthase family. Mg(2+) serves as cofactor. Expressed specifically in the secretory cells of the glandular trichomes.

The protein localises to the plastid. It localises to the chloroplast. It catalyses the reaction (2E,6E,10E)-geranylgeranyl diphosphate + H2O = 8-hydroxycopalyl diphosphate. The protein operates within secondary metabolite biosynthesis; terpenoid biosynthesis. Class-II terpene synthase that synthesizes 8-hydroxy-copalyl diphosphate. Involved in the biosynthesis of cis-abienol, a labdane diterpene that can be used as synthesis precursor of ambergris substitution fragance products. This Nicotiana tabacum (Common tobacco) protein is Copal-8-ol diphosphate hydratase, chloroplastic.